The chain runs to 378 residues: Myoglobin (378 aa).

Residue A2 is modified to Blocked amino end (Ala). A heme-binding site is contributed by H332.

It belongs to the indoleamine 2,3-dioxygenase family. As to quaternary structure, homodimer. It depends on heme as a cofactor.

In terms of biological role, serves a reserve supply of oxygen and facilitates the movement of oxygen within muscles. This is Myoglobin from Haliotis diversicolor (Abalone).